A 109-amino-acid polypeptide reads, in one-letter code: Small ribosomal subunit protein uS10c (109 aa).

Belongs to the universal ribosomal protein uS10 family. As to quaternary structure, part of the 30S ribosomal subunit.

It is found in the plastid. The protein localises to the chloroplast. Involved in the binding of tRNA to the ribosomes. The protein is Small ribosomal subunit protein uS10c of Cyanidium caldarium (Red alga).